The sequence spans 303 residues: Recombination-associated protein RdgC (303 aa).

This sequence belongs to the RdgC family.

The protein resides in the cytoplasm. The protein localises to the nucleoid. In terms of biological role, may be involved in recombination. In Shewanella sediminis (strain HAW-EB3), this protein is Recombination-associated protein RdgC.